An 82-amino-acid chain; its full sequence is Small ribosomal subunit protein bS16 (82 aa).

Belongs to the bacterial ribosomal protein bS16 family.

This Histophilus somni (strain 2336) (Haemophilus somnus) protein is Small ribosomal subunit protein bS16.